Reading from the N-terminus, the 227-residue chain is Floral homeotic protein DEFICIENS (227 aa).

In terms of domain architecture, MADS-box spans 3–57; that stretch reads RGKIQIKRIENQTNRQVTYSKRRNGLFKKAHELSVLCDAKVSIIMISSTQKLHEY. The region spanning 84–174 is the K-box domain; that stretch reads YEKMQEHLKK…VLEFDARRED (91 aa).

The protein localises to the nucleus. Its function is as follows. Transcription factor involved in the genetic control of flower development. Acts in conjunction with GLOBOSA (glo). The sequence is that of Floral homeotic protein DEFICIENS (DEFA) from Antirrhinum majus (Garden snapdragon).